The chain runs to 1021 residues: Sodium/potassium-transporting ATPase subunit alpha-1 (1021 aa).

A propeptide spanning residues 1 to 5 (MGKGG) is cleaved from the precursor. Over residues 1 to 11 (MGKGGGRDKYE) the composition is skewed to basic and acidic residues. The segment at 1–37 (MGKGGGRDKYEPAAISEHGNKKKAKKERDMDELKKEV) is disordered. At 6 to 85 (GRDKYEPAAI…NALTPPPTTP (80 aa)) the chain is on the cytoplasmic side. Lysine 9 carries the N6-acetyllysine modification. At tyrosine 10 the chain carries Phosphotyrosine. The residue at position 16 (serine 16) is a Phosphoserine; by PKC. Lysine 21 is subject to N6-acetyllysine. Positions 26-37 (KERDMDELKKEV) are enriched in basic and acidic residues. Phosphoserine is present on residues serine 38 and serine 45. A phosphoinositide-3 kinase binding region spans residues 80 to 82 (PPP). A helical transmembrane segment spans residues 86–106 (EWVKFCRQLFGGFSMLLWIGA). The Extracellular portion of the chain corresponds to 107 to 129 (ILCFLAYGIQAATEEEPQNDNLY). The chain crosses the membrane as a helical span at residues 130-150 (LGVVLSAVVIITGCFSYYQEA). Residues 151 to 286 (KSSKIMESFK…GGQTPIAAEI (136 aa)) lie on the Cytoplasmic side of the membrane. The segment at 214 to 233 (SSLTGESEPQTRSPDFTNEN) is disordered. Phosphoserine is present on serine 226. Residue tyrosine 258 is modified to Phosphotyrosine. A helical membrane pass occupies residues 287–306 (EHFIHIITGVAVFLGVTFFI). Residues 307 to 318 (LSLILEYTWLEA) lie on the Extracellular side of the membrane. A helical transmembrane segment spans residues 319-336 (VIFLIGIIVANVPEGLLA). Residues 337–770 (TVTVCLTLTA…EEGRLIFDNL (434 aa)) lie on the Cytoplasmic side of the membrane. Aspartate 374 (4-aspartylphosphate intermediate) is an active-site residue. Phosphoserine occurs at positions 450 and 482. ATP is bound at residue lysine 485. A Phosphotyrosine modification is found at tyrosine 540. The mediates interaction with SCN7A stretch occupies residues 594 to 715 (RAAVPDAVGK…QGAIVAVTGD (122 aa)). An N6-succinyllysine modification is found at lysine 659. The residue at position 666 (serine 666) is a Phosphoserine. Positions 715 and 719 each coordinate Mg(2+). The chain crosses the membrane as a helical span at residues 771-790 (KKSIAYTLTSNIPEITPFLI). Topologically, residues 791–800 (FIIANIPLPL) are extracellular. The chain crosses the membrane as a helical span at residues 801-821 (GTVTILCIDLGTDMVPAISLA). At 822 to 841 (YEQAESDIMKRQPRNPQTDK) the chain is on the cytoplasmic side. Residues 842 to 864 (LVNERLISMAYGQIGMIQALGGF) form a helical membrane-spanning segment. Topologically, residues 865–916 (FTYFVILAENGFLPIHLLGLRVDWDDRWVNDVEDSYGQQWTYEQRKIVEFTC) are extracellular. A helical membrane pass occupies residues 917–936 (HTAFFVSIVVVQWADLVICK). The Cytoplasmic portion of the chain corresponds to 937–949 (TRRNSVFQQGMKN). At serine 941 the chain carries Phosphoserine; by PKA. Residues 950 to 968 (KILIFGLFEETALAAFLSY) traverse the membrane as a helical segment. At 969–983 (CPGMGVALRMYPLKP) the chain is on the extracellular side. The chain crosses the membrane as a helical span at residues 984–1004 (TWWFCAFPYSLLIFVYDEVRK). Topologically, residues 1005–1021 (LIIRRRPGGWVEKETYY) are cytoplasmic.

Belongs to the cation transport ATPase (P-type) (TC 3.A.3) family. Type IIC subfamily. As to quaternary structure, the sodium/potassium-transporting ATPase is composed of a catalytic alpha subunit, an auxiliary non-catalytic beta subunit and an additional regulatory subunit. Interacts with regulatory subunit FXYD1. Interacts with regulatory subunit FXYD3. Interacts with SIK1. Interacts with SLC35G1 and STIM1. Interacts with CLN3; this interaction regulates the sodium/potassium-transporting ATPase complex localization at the plasma membrane. Interacts with SCN7A; activates ATP1A1 P-type sodium:potassium-exchanging transporter activity which indirectly signals to nearby neurons to regulate sodium homeostasis. Post-translationally, phosphorylation on Tyr-10 modulates pumping activity. Phosphorylation of Ser-941 by PKA modulates the response of ATP1A1 to PKC. Dephosphorylation by protein phosphatase 2A (PP2A) following increases in intracellular sodium, leading to increase catalytic activity.

It is found in the cell membrane. The protein resides in the basolateral cell membrane. The protein localises to the sarcolemma. Its subcellular location is the cell projection. It localises to the axon. It is found in the melanosome. It catalyses the reaction K(+)(out) + Na(+)(in) + ATP + H2O = K(+)(in) + Na(+)(out) + ADP + phosphate + H(+). In terms of biological role, this is the catalytic component of the active enzyme, which catalyzes the hydrolysis of ATP coupled with the exchange of sodium and potassium ions across the plasma membrane. This action creates the electrochemical gradient of sodium and potassium ions, providing the energy for active transport of various nutrients. Could also be part of an osmosensory signaling pathway that senses body-fluid sodium levels and controls salt intake behavior as well as voluntary water intake to regulate sodium homeostasis. The polypeptide is Sodium/potassium-transporting ATPase subunit alpha-1 (ATP1A1) (Equus caballus (Horse)).